The following is a 504-amino-acid chain: Anaerobic nitric oxide reductase transcription regulator NorR (504 aa).

Asp-57 is subject to 4-aspartylphosphate. The Sigma-54 factor interaction domain occupies 187 to 416 (MIGLSPGMTQ…LEHAIHRAVV (230 aa)). ATP is bound by residues 215-222 (GETGTGKE) and 278-287 (ADNGTLFLDE). The H-T-H motif DNA-binding region spans 479 to 498 (WAACARMLETDVANLHRLAK).

It functions in the pathway nitrogen metabolism; nitric oxide reduction. Functionally, required for the expression of anaerobic nitric oxide (NO) reductase, acts as a transcriptional activator for at least the norVW operon. Activation also requires sigma-54. The sequence is that of Anaerobic nitric oxide reductase transcription regulator NorR from Escherichia coli O127:H6 (strain E2348/69 / EPEC).